Consider the following 280-residue polypeptide: Phosphonates import ATP-binding protein PhnC 1 (280 aa).

Residues 3–247 enclose the ABC transporter domain; it reads FRLDAASVSY…LLRELYASES (245 aa). 36-43 is an ATP binding site; it reads GPSGAGKT.

Belongs to the ABC transporter superfamily. Phosphonates importer (TC 3.A.1.9.1) family. As to quaternary structure, the complex is composed of two ATP-binding proteins (PhnC), two transmembrane proteins (PhnE) and a solute-binding protein (PhnD).

Its subcellular location is the cell inner membrane. It carries out the reaction phosphonate(out) + ATP + H2O = phosphonate(in) + ADP + phosphate + H(+). Its function is as follows. Part of the ABC transporter complex PhnCDE involved in phosphonates import. Responsible for energy coupling to the transport system. The polypeptide is Phosphonates import ATP-binding protein PhnC 1 (Cupriavidus necator (strain ATCC 17699 / DSM 428 / KCTC 22496 / NCIMB 10442 / H16 / Stanier 337) (Ralstonia eutropha)).